Consider the following 203-residue polypeptide: MVKVKICGLRRKEDIEYANELKPDYVGFVFAKSKRQIEVEQALDLISLLDKEIKTVGVFVNEPVENALKIAQTLNLDVLQFHGDETQDYIDNFKNFTVWKAIRIKDKEDLEKTKEFKVNSFVFDTLTKNEYGGTGKTFNWEVLKGFELNVPIILAGGLNENNVEEAIRIVNPYAVDVSSGVETEGYKDFKKMKSFIEKVRGIR.

It belongs to the TrpF family.

It catalyses the reaction N-(5-phospho-beta-D-ribosyl)anthranilate = 1-(2-carboxyphenylamino)-1-deoxy-D-ribulose 5-phosphate. It participates in amino-acid biosynthesis; L-tryptophan biosynthesis; L-tryptophan from chorismate: step 3/5. In Thermoanaerobacter sp. (strain X514), this protein is N-(5'-phosphoribosyl)anthranilate isomerase.